Reading from the N-terminus, the 607-residue chain is Discoidin-inducing complex subunit B (607 aa).

The signal sequence occupies residues 1-19 (MNKKIIILIYLIFIKSIVG). The Extracellular portion of the chain corresponds to 20–554 (QNPVWIGGSG…LGTDGISKGS (535 aa)). Asn75, Asn161, Asn215, Asn276, Asn277, Asn307, Asn324, Asn453, Asn477, and Asn527 each carry an N-linked (GlcNAc...) asparagine glycan. Residues 555–575 (LAGISVSMVALACFVSLGVWW) traverse the membrane as a helical segment. Residues 576-607 (KTSKKNDQRNDSQVLTNFSQNKSDDIDVERKL) lie on the Cytoplasmic side of the membrane.

Forms a complex with psiF/dicA.

The protein resides in the membrane. Its subcellular location is the secreted. Its function is as follows. Component of a complex that acts as a quorum sensing protein regulating discoidin gene expression during growth and development. Its function in the complex is unclear as it has no ability to induce discoidin during growth and development by itself. The chain is Discoidin-inducing complex subunit B (dicB) from Dictyostelium discoideum (Social amoeba).